The chain runs to 373 residues: Aminomethyltransferase (373 aa).

The protein belongs to the GcvT family. In terms of assembly, the glycine cleavage system is composed of four proteins: P, T, L and H.

It carries out the reaction N(6)-[(R)-S(8)-aminomethyldihydrolipoyl]-L-lysyl-[protein] + (6S)-5,6,7,8-tetrahydrofolate = N(6)-[(R)-dihydrolipoyl]-L-lysyl-[protein] + (6R)-5,10-methylene-5,6,7,8-tetrahydrofolate + NH4(+). Its function is as follows. The glycine cleavage system catalyzes the degradation of glycine. The protein is Aminomethyltransferase of Prochlorococcus marinus (strain SARG / CCMP1375 / SS120).